We begin with the raw amino-acid sequence, 238 residues long: 3-deoxy-D-manno-octulosonic acid kinase (238 aa).

D167 is a catalytic residue.

This sequence belongs to the protein kinase superfamily. KdkA/RfaP family.

It localises to the cell inner membrane. The catalysed reaction is an alpha-Kdo-(2-&gt;6)-lipid IVA + ATP = a 4-O-phospho-alpha-Kdo-(2-&gt;6)-lipid IVA + ADP + H(+). It functions in the pathway bacterial outer membrane biogenesis; LPS core biosynthesis. Catalyzes the ATP-dependent phosphorylation of the 3-deoxy-D-manno-octulosonic acid (Kdo) residue in Kdo-lipid IV(A) at the 4-OH position. The polypeptide is 3-deoxy-D-manno-octulosonic acid kinase (Vibrio parahaemolyticus serotype O3:K6 (strain RIMD 2210633)).